A 254-amino-acid polypeptide reads, in one-letter code: Mannose-binding protein (254 aa).

A signal peptide spans 1-19 (MTLLQPFSALLLCLSLMMA). The interval 46–99 (NGLPGRDGRDGPKGEKGDPGEGLRGLQGLPGKAGPQGLKGEVGPQGEKGQKGER) is disordered. The segment covering 51-66 (RDGRDGPKGEKGDPGE) has biased composition (basic and acidic residues). Position 57 is a 4-hydroxyproline (P57). 5-hydroxylysine is present on residues K58 and K61. Residues K58 and K61 are each glycosylated (O-linked (Gal...) hydroxylysine). 4-hydroxyproline is present on P75. 2 positions are modified to 5-hydroxylysine: K93 and K96. The region spanning 140–250 (VGKKMFVSTG…LDCSNSNIFI (111 aa)) is the C-type lectin domain. 2 disulfides stabilise this stretch: C161/C252 and C229/C243.

Oligomeric complex of 3 or more homotrimers.

The protein resides in the secreted. In terms of biological role, calcium-dependent lectin involved in innate immune defense. Binds mannose, fucose and N-acetylglucosamine on different microorganisms and activates the lectin complement pathway. In Gallus gallus (Chicken), this protein is Mannose-binding protein.